The chain runs to 202 residues: Small ribosomal subunit protein uS4 (202 aa).

An S4 RNA-binding domain is found at Ser91 to Asp168.

It belongs to the universal ribosomal protein uS4 family. In terms of assembly, part of the 30S ribosomal subunit. Contacts protein S5. The interaction surface between S4 and S5 is involved in control of translational fidelity.

One of the primary rRNA binding proteins, it binds directly to 16S rRNA where it nucleates assembly of the body of the 30S subunit. Its function is as follows. With S5 and S12 plays an important role in translational accuracy. This Ehrlichia ruminantium (strain Welgevonden) protein is Small ribosomal subunit protein uS4.